The chain runs to 236 residues: Rab-like protein 3 (236 aa).

The small GTPase-like stretch occupies residues M1–C235. GTP is bound by residues G16–S21, K148–D150, and D179–C180.

This sequence belongs to the small GTPase superfamily. Rab family. In terms of assembly, homodimer. Interacts with GPR89; the interaction stabilizes GPR89. Interacts with RAP1GDS1.

Required for KRAS signaling regulation and modulation of cell proliferation. Regulator of KRAS prenylation, and probably prenylation of other small GTPases. Required for lymphocyte development and function. Not required for myeloid cell development. This chain is Rab-like protein 3 (Rabl3), found in Mus musculus (Mouse).